The primary structure comprises 178 residues: Large ribosomal subunit protein uL6 (178 aa).

The protein belongs to the universal ribosomal protein uL6 family. In terms of assembly, part of the 50S ribosomal subunit.

Functionally, this protein binds to the 23S rRNA, and is important in its secondary structure. It is located near the subunit interface in the base of the L7/L12 stalk, and near the tRNA binding site of the peptidyltransferase center. The sequence is that of Large ribosomal subunit protein uL6 from Oenococcus oeni (strain ATCC BAA-331 / PSU-1).